Here is a 300-residue protein sequence, read N- to C-terminus: F-box/LRR-repeat protein 15 (300 aa).

Met-1 carries the N-acetylmethionine modification. Residues 19–66 (LLDLPWEDVLLPHVLNWVPLRQLLRLQRVSRAFRALVQLHLARLRRFD) form the F-box domain. Residues 113 to 269 (NPQLRSVALA…EPSLSRLRKR (157 aa)) form an interaction with SMURF1 region. LRR repeat units lie at residues 141–162 (RLQRISLAHCDWVDGLALRGLA), 167–188 (ALEELDLTACRQLKDEAIVYLA), 194–215 (GLRSLSLAVNANVGDTAVQELA), 220–241 (QLEHLDLTGCLRVGSDGVRTLA), and 246–267 (ALRSLRVRHCHHVAEPSLSRLR).

Belongs to the FBXL15 family. As to quaternary structure, part of the SCF (SKP1-CUL1-F-box) E3 ubiquitin-protein ligase complex SCF(FBXL15) composed of CUL1, SKP1, RBX1 and FBXL15.

It is found in the cytoplasm. Its pathway is protein modification; protein ubiquitination. In terms of biological role, substrate recognition component of a SCF (SKP1-CUL1-F-box protein) E3 ubiquitin-protein ligase complex which mediates the ubiquitination and subsequent proteasomal degradation of SMURF1, thereby acting as a positive regulator of the BMP signaling pathway. Required for dorsal/ventral pattern formation. Also mediates ubiquitination of SMURF2 and WWP2. Required for bone mass maintenance. The chain is F-box/LRR-repeat protein 15 (Fbxl15) from Rattus norvegicus (Rat).